A 567-amino-acid chain; its full sequence is MAQRIFTLILLLCSTSAFAGLFDAPGRSQFVPADRAFVFDFQQNQHDLTLSWQVKEGYYLYRKQISITPTKADIAAVQLPAGVWHEDEFYGKSEIYRKRLNVPVTVNQAAAGATLTVTYQGCADAGFCYPPETKTVPLSEVAAAIDATPTPAVTQTGETSKPAAQLPFSALWALLIGIGIAFTPCVLPMYPLISGIVLGGRQRLSTGRALLLAFIYVQGMALTYTALGLVVAAAGLQFQAALQHPYVLIGLAIVFTLLALSMFGLFTLQLPSSLQTRLTLMSNRQQGGSPGGVFVMGAIAGLICSPCTTAPLSAILLYIAQSGNMWLGGGTLYLYALGMGLPLMLVTVFGNRLLPKSGPWMAHVKTAFGFVILALPVFLLERIIGEAWGLRLWSLLGVAFFGWAFITSLQARRAWMRIVQIILLAAALISVRPLQDWAFGSPSAQAPAHLNFTAISTVDELNQALAQAKGKPVMLDFYADWCVACKEFEKYTFSDPRVQQALGDTVLLQANVTANNAQDVALLKHLQVLGLPTILFFDAQGQEQPQARVTGFMDAATFSAHLHDRQP.

The N-terminal stretch at 1 to 19 is a signal peptide; it reads MAQRIFTLILLLCSTSAFA. Intrachain disulfides connect C122-C128 and C185-C307. The next 8 membrane-spanning stretches (helical) occupy residues 166-186, 211-231, 246-266, 299-319, 326-346, 360-380, 387-407, and 418-438; these read LPFS…TPCV, LLAF…GLVV, YVLI…FGLF, IAGL…LLYI, WLGG…LMLV, WMAH…VFLL, AWGL…AFIT, and IVQI…QDWA. The 133-residue stretch at 435-567 folds into the Thioredoxin domain; it reads QDWAFGSPSA…FSAHLHDRQP (133 aa). Cysteines 482 and 485 form a disulfide.

Belongs to the thioredoxin family. DsbD subfamily.

Its subcellular location is the cell inner membrane. It carries out the reaction [protein]-dithiol + NAD(+) = [protein]-disulfide + NADH + H(+). The enzyme catalyses [protein]-dithiol + NADP(+) = [protein]-disulfide + NADPH + H(+). Functionally, required to facilitate the formation of correct disulfide bonds in some periplasmic proteins and for the assembly of the periplasmic c-type cytochromes. Acts by transferring electrons from cytoplasmic thioredoxin to the periplasm. This transfer involves a cascade of disulfide bond formation and reduction steps. The polypeptide is Thiol:disulfide interchange protein DsbD (Salmonella paratyphi A (strain ATCC 9150 / SARB42)).